Here is a 139-residue protein sequence, read N- to C-terminus: Cytochrome c-type biogenesis protein CcmE (139 aa).

Residues 1–7 are Cytoplasmic-facing; the sequence is MTKRQNR. Residues 8–28 form a helical; Signal-anchor for type II membrane protein membrane-spanning segment; sequence MTLVALLVIGVSLTGYLGLKA. The Periplasmic segment spans residues 29-139; sequence FNENLLYFFS…ADALEKAKNK (111 aa). His-120 and Tyr-124 together coordinate heme.

Belongs to the CcmE/CycJ family.

The protein localises to the cell inner membrane. Its function is as follows. Heme chaperone required for the biogenesis of c-type cytochromes. Transiently binds heme delivered by CcmC and transfers the heme to apo-cytochromes in a process facilitated by CcmF and CcmH. The polypeptide is Cytochrome c-type biogenesis protein CcmE (Ruthia magnifica subsp. Calyptogena magnifica).